The following is an 812-amino-acid chain: DNA replication licensing factor MCM3 (812 aa).

Alanine 2 is subject to N-acetylalanine. At serine 160 the chain carries Phosphoserine. Lysine 293 bears the N6-acetyllysine mark. In terms of domain architecture, MCM spans 295 to 502 (VFEQLARSLA…QDREISDHVL (208 aa)). Positions 353, 393, 394, 395, and 397 each coordinate ADP. The Arginine finger motif lies at 477–480 (SRFD). Lysine 547 bears the N6-acetyllysine mark. Serine 611 carries the post-translational modification Phosphoserine. ATP is bound at residue arginine 664. Positions 664 to 744 (RKKASEDESD…TQDSQKVELS (81 aa)) are disordered. Serine 668, serine 672, and serine 681 each carry phosphoserine. Residues 670-681 (DESDLEDEEEKS) are compositionally biased toward acidic residues. Tyrosine 705 carries the post-translational modification Phosphotyrosine. At serine 708 the chain carries Phosphoserine. Phosphothreonine occurs at positions 719, 722, and 729. Basic and acidic residues predominate over residues 720-744 (PKTDDSQEKTDDSQETQDSQKVELS). Phosphoserine occurs at positions 732 and 738.

The protein belongs to the MCM family. As to quaternary structure, component of the MCM2-7 complex. The complex forms a toroidal hexameric ring with the proposed subunit order MCM2-MCM6-MCM4-MCM7-MCM3-MCM5. Component of the CMG helicase complex, a hexameric ring of related MCM2-7 subunits stabilized by CDC45 and the tetrameric GINS complex. Associated with the replication-specific DNA polymerase alpha. Interacts with MCMBP. Interacts with ANKRD17. Interacts with MCM3AP; this interaction leads to MCM3 acetylation. Acetylated by MCM3AP. Post-translationally, O-glycosylated (O-GlcNAcylated), in a cell cycle-dependent manner.

The protein resides in the nucleus. Its subcellular location is the chromosome. The catalysed reaction is ATP + H2O = ADP + phosphate + H(+). Its function is as follows. Acts as a component of the MCM2-7 complex (MCM complex) which is the replicative helicase essential for 'once per cell cycle' DNA replication initiation and elongation in eukaryotic cells. Core component of CDC45-MCM-GINS (CMG) helicase, the molecular machine that unwinds template DNA during replication, and around which the replisome is built. The active ATPase sites in the MCM2-7 ring are formed through the interaction surfaces of two neighboring subunits such that a critical structure of a conserved arginine finger motif is provided in trans relative to the ATP-binding site of the Walker A box of the adjacent subunit. The six ATPase active sites, however, are likely to contribute differentially to the complex helicase activity. Required for the entry in S phase and for cell division. The chain is DNA replication licensing factor MCM3 (Mcm3) from Mus musculus (Mouse).